The sequence spans 508 residues: Maturase K (508 aa).

It belongs to the intron maturase 2 family. MatK subfamily.

Its subcellular location is the plastid. The protein localises to the chloroplast. Functionally, usually encoded in the trnK tRNA gene intron. Probably assists in splicing its own and other chloroplast group II introns. This chain is Maturase K, found in Amburana cearensis (Cerejeira).